Consider the following 362-residue polypeptide: Homeobox protein Nkx-2.3 (362 aa).

Disordered regions lie at residues 126–149 and 203–222; these read EAAGDCKTSEDGERPKPRSRRKPR and QRQDKSLELGTHAPPPPPRR. Positions 132-141 are enriched in basic and acidic residues; sequence KTSEDGERPK. The segment at residues 145–204 is a DNA-binding region (homeobox); the sequence is RRKPRVLFSQAQVFELERRFKQQRYLSAPEREHLASSLKLTSTQVKIWFQNRRYKCKRQR.

This sequence belongs to the NK-2 homeobox family. Expressed in spleen and intestine. Also expressed in salivary gland and tongue.

The protein localises to the nucleus. In terms of biological role, transcriptional regulator essential for normal development and functions of the small intestine and spleen. Activates directly MADCAM1 expression. Required for homing of lymphocytes in spleen and mucosa-associated lymphoid tissue. May have a role during pharyngeal organogenesis. In Mus musculus (Mouse), this protein is Homeobox protein Nkx-2.3 (Nkx2-3).